The primary structure comprises 870 residues: MSRFFRGDSSSESSSDEEEDLYSDDEEVQEQPEEESEEDDSEEDDDDDDSDSSSDDGVGKKTGANAFLKDDSDSDSESSGDEGVKVVKSAKNKRFEELEATAKAIENGEKINDWGSISAEFDKLNRQVAKLLQSGTTPKVYIKALAELEDFMNETLAKQKVTPKKMNATNSRGLNAVKQKLKKTSKEHQKDIDSFRADKDAYMESEDEEVVAPKPKKAKSSAAAQNLVIDGDDDEGWGTVGKGGRTLQFTPESILKHLRTILESRGKKNTDRNEQIKIMEKLYEVAATPYQRIRVLLTLISTRFDMTTGTQTFMSQEQWKAAEKEFATLLSVVETNREFVVVETAEPWEDDEKLPTVADGEKFKIPGSIVSFVERLDDELTRSLQHIDPHTAEYIERLSDESDLYNNIVRTMLYQEEISKDESLTEPQRSLNRVVMRRLEHVYFKPSAVIKILDENCWKAIPAELDSTITPRGSVQDAKTLVNILCNYLYINTEGEGLTKARAMLCQIYFEALHDNYYKARDMMLMSHLQETINSFDVHSQILFNRTLVQVGLCAFRAGLVYEAQTTLQEICGSGRQKELLAQGVMIQRYNQVTPDQERLEKQRQLPFHMHINLELLECVYLTCSMLLEIPLFAQTGSSPDIKKRIISKTYRRMLEYHERQIFTGPPENTRDHVMQASKALAQGEWKKATDYIHSIKIWELMSKPEEIKAMLSAQIQEEGLRTYLFTYAPYYDTLSVNRLSSMFELPDRKVAAIVSKMISHEELAAALDQVNSSIIFRKGVELSRLQSLALSLSDKASGLIESNERTLETRTQGTANAFERQGGRGGRGGNRGGRGGNRGGRGGISNAPRQAGGTQFTGGALGAAVGSRA.

The segment at 1-92 is disordered; sequence MSRFFRGDSS…GVKVVKSAKN (92 aa). Positions 14-54 are enriched in acidic residues; the sequence is SSDEEEDLYSDDEEVQEQPEEESEEDDSEEDDDDDDSDSSS. Residues 608–782 enclose the PCI domain; sequence FHMHINLELL…SSIIFRKGVE (175 aa). Residues 807–870 are disordered; the sequence is TLETRTQGTA…ALGAAVGSRA (64 aa). Gly residues predominate over residues 824–844; it reads GRGGRGGNRGGRGGNRGGRGG.

This sequence belongs to the eIF-3 subunit C family. In terms of assembly, component of the eukaryotic translation initiation factor 3 (eIF-3) complex.

The protein resides in the cytoplasm. Its function is as follows. Component of the eukaryotic translation initiation factor 3 (eIF-3) complex, which is involved in protein synthesis of a specialized repertoire of mRNAs and, together with other initiation factors, stimulates binding of mRNA and methionyl-tRNAi to the 40S ribosome. The eIF-3 complex specifically targets and initiates translation of a subset of mRNAs involved in cell proliferation. The chain is Eukaryotic translation initiation factor 3 subunit C (nip1) from Sclerotinia sclerotiorum (strain ATCC 18683 / 1980 / Ss-1) (White mold).